We begin with the raw amino-acid sequence, 332 residues long: Methionine synthase (332 aa).

Residues H211, C213, and C296 each coordinate Zn(2+).

Belongs to the archaeal MetE family. Zn(2+) is required as a cofactor.

It functions in the pathway amino-acid biosynthesis; L-methionine biosynthesis via de novo pathway. Functionally, catalyzes the transfer of a methyl group to L-homocysteine resulting in methionine formation. The physiological methyl donor is unknown. This chain is Methionine synthase, found in Saccharolobus islandicus (strain L.S.2.15 / Lassen #1) (Sulfolobus islandicus).